A 375-amino-acid polypeptide reads, in one-letter code: Cobalt-precorrin-5B C(1)-methyltransferase (375 aa).

It belongs to the CbiD family.

It carries out the reaction Co-precorrin-5B + S-adenosyl-L-methionine = Co-precorrin-6A + S-adenosyl-L-homocysteine. The protein operates within cofactor biosynthesis; adenosylcobalamin biosynthesis; cob(II)yrinate a,c-diamide from sirohydrochlorin (anaerobic route): step 6/10. In terms of biological role, catalyzes the methylation of C-1 in cobalt-precorrin-5B to form cobalt-precorrin-6A. The protein is Cobalt-precorrin-5B C(1)-methyltransferase of Paracidovorax citrulli (strain AAC00-1) (Acidovorax citrulli).